Here is a 31-residue protein sequence, read N- to C-terminus: Protamine CIII (31 aa).

The tract at residues 1 to 31 (MPRRRRASRPVRRRRRPRVSRRRRRGGRRRR) is disordered.

In terms of tissue distribution, testis.

It is found in the nucleus. It localises to the chromosome. Protamines substitute for histones in the chromatin of sperm during the haploid phase of spermatogenesis. They compact sperm DNA into a highly condensed, stable and inactive complex. The sequence is that of Protamine CIII from Oncorhynchus mykiss (Rainbow trout).